The sequence spans 1473 residues: DNA topoisomerase 2 (1473 aa).

The interval 1-20 (MATKLPLQNSNAANVAKAPA) is disordered. The segment covering 9–20 (NSNAANVAKAPA) has biased composition (low complexity). ATP contacts are provided by residues N91, N120, 148-150 (SSN), and 161-168 (GRNGYGAK). The tract at residues 345 to 347 (NKK) is interaction with DNA. 378–380 (QTK) is a binding site for ATP. The 115-residue stretch at 455 to 569 (CTLILTEGDS…SLLQVPSFLV (115 aa)) folds into the Toprim domain. Positions 461, 538, and 540 each coordinate Mg(2+). Residues 704–1163 (IPSMVDGLKP…TPKSLWLSDL (460 aa)) enclose the Topo IIA-type catalytic domain. Catalysis depends on Y794, which acts as the O-(5'-phospho-DNA)-tyrosine intermediate. Positions 980-989 (KLTTTIATSN) are interaction with DNA. Disordered regions lie at residues 1195–1230 (SGAAVKVKRQAPKKPAPKKTTKKASESETTEASYSA), 1242–1297 (KPKA…EVEE), and 1313–1473 (GSAP…EDDE). 2 stretches are compositionally biased toward basic residues: residues 1200–1216 (KVKRQAPKKPAPKKTTK) and 1278–1288 (PKGRQGAKKKA). A compositionally biased stretch (low complexity) spans 1351–1360 (KPAATKAAKP). Polar residues-rich tracts occupy residues 1394-1404 (SPFNKKSSSVM) and 1417-1427 (ENVAGNSSSEK). Residues 1453-1473 (SESESANDSEFDDIEDDEDDE) show a composition bias toward acidic residues.

This sequence belongs to the type II topoisomerase family. In terms of assembly, homodimer. It depends on Mg(2+) as a cofactor. Mn(2+) is required as a cofactor. Requires Ca(2+) as cofactor.

It catalyses the reaction ATP-dependent breakage, passage and rejoining of double-stranded DNA.. Functionally, control of topological states of DNA by transient breakage and subsequent rejoining of DNA strands. Topoisomerase II makes double-strand breaks. The polypeptide is DNA topoisomerase 2 (TOP2) (Arabidopsis thaliana (Mouse-ear cress)).